The sequence spans 718 residues: DNA ligase (718 aa).

NAD(+)-binding positions include 44 to 48, 93 to 94, and Glu127; these read DADYD and SL. The N6-AMP-lysine intermediate role is filled by Lys129. Positions 150, 186, 302, and 326 each coordinate NAD(+). Positions 432, 435, 456, and 462 each coordinate Zn(2+). A BRCT domain is found at 640–718; sequence TAGSPVAGKT…EDEWLALISG (79 aa).

The protein belongs to the NAD-dependent DNA ligase family. LigA subfamily. It depends on Mg(2+) as a cofactor. The cofactor is Mn(2+).

It carries out the reaction NAD(+) + (deoxyribonucleotide)n-3'-hydroxyl + 5'-phospho-(deoxyribonucleotide)m = (deoxyribonucleotide)n+m + AMP + beta-nicotinamide D-nucleotide.. DNA ligase that catalyzes the formation of phosphodiester linkages between 5'-phosphoryl and 3'-hydroxyl groups in double-stranded DNA using NAD as a coenzyme and as the energy source for the reaction. It is essential for DNA replication and repair of damaged DNA. The protein is DNA ligase of Rhizobium etli (strain CIAT 652).